Here is a 354-residue protein sequence, read N- to C-terminus: Fructose-bisphosphate aldolase (354 aa).

Residue Ser-61 participates in D-glyceraldehyde 3-phosphate binding. Residue Asp-104 is the Proton donor of the active site. Residues His-105, Asp-139, Glu-169, and His-221 each coordinate Zn(2+). Gly-222 contributes to the dihydroxyacetone phosphate binding site. His-260 is a Zn(2+) binding site. Residues 261-263 (GGS) and 282-285 (NIDT) contribute to the dihydroxyacetone phosphate site.

It belongs to the class II fructose-bisphosphate aldolase family. In terms of assembly, homodimer. It depends on Zn(2+) as a cofactor.

It carries out the reaction beta-D-fructose 1,6-bisphosphate = D-glyceraldehyde 3-phosphate + dihydroxyacetone phosphate. It participates in carbohydrate degradation; glycolysis; D-glyceraldehyde 3-phosphate and glycerone phosphate from D-glucose: step 4/4. Its function is as follows. Catalyzes the aldol condensation of dihydroxyacetone phosphate (DHAP or glycerone-phosphate) with glyceraldehyde 3-phosphate (G3P) to form fructose 1,6-bisphosphate (FBP) in gluconeogenesis and the reverse reaction in glycolysis. The chain is Fructose-bisphosphate aldolase (fba) from Campylobacter jejuni subsp. jejuni serotype O:2 (strain ATCC 700819 / NCTC 11168).